Reading from the N-terminus, the 544-residue chain is Chaperonin GroEL (544 aa).

ATP is bound by residues 30–33 (TLGP), Lys51, 87–91 (DGTTT), Gly415, and Asp495.

It belongs to the chaperonin (HSP60) family. As to quaternary structure, forms a cylinder of 14 subunits composed of two heptameric rings stacked back-to-back. Interacts with the co-chaperonin GroES.

Its subcellular location is the cytoplasm. It carries out the reaction ATP + H2O + a folded polypeptide = ADP + phosphate + an unfolded polypeptide.. Functionally, together with its co-chaperonin GroES, plays an essential role in assisting protein folding. The GroEL-GroES system forms a nano-cage that allows encapsulation of the non-native substrate proteins and provides a physical environment optimized to promote and accelerate protein folding. This is Chaperonin GroEL from Neisseria flavescens.